The sequence spans 115 residues: NADH-ubiquinone oxidoreductase chain 3 (115 aa).

Transmembrane regions (helical) follow at residues 4–24, 55–75, and 87–107; these read FMAL…AFWL, FFLV…LLPL, and MMLT…YEWV.

The protein belongs to the complex I subunit 3 family. Core subunit of respiratory chain NADH dehydrogenase (Complex I) which is composed of 45 different subunits. Interacts with TMEM186. Interacts with TMEM242.

It is found in the mitochondrion inner membrane. It carries out the reaction a ubiquinone + NADH + 5 H(+)(in) = a ubiquinol + NAD(+) + 4 H(+)(out). Functionally, core subunit of the mitochondrial membrane respiratory chain NADH dehydrogenase (Complex I) which catalyzes electron transfer from NADH through the respiratory chain, using ubiquinone as an electron acceptor. Essential for the catalytic activity of complex I. This is NADH-ubiquinone oxidoreductase chain 3 from Osgoodomys banderanus (Michoacan deer mouse).